Consider the following 260-residue polypeptide: Octanoyltransferase (260 aa).

One can recognise a BPL/LPL catalytic domain in the interval 42–241; it reads PQVPDGLLLL…SFCQVFGLQA (200 aa). Substrate is bound by residues 97–104, 172–174, and 185–187; these read RGGEVTYH, AIG, and GFA. Residue cysteine 203 is the Acyl-thioester intermediate of the active site.

It belongs to the LipB family.

The protein localises to the cytoplasm. It carries out the reaction octanoyl-[ACP] + L-lysyl-[protein] = N(6)-octanoyl-L-lysyl-[protein] + holo-[ACP] + H(+). The protein operates within protein modification; protein lipoylation via endogenous pathway; protein N(6)-(lipoyl)lysine from octanoyl-[acyl-carrier-protein]: step 1/2. Its function is as follows. Catalyzes the transfer of endogenously produced octanoic acid from octanoyl-acyl-carrier-protein onto the lipoyl domains of lipoate-dependent enzymes. Lipoyl-ACP can also act as a substrate although octanoyl-ACP is likely to be the physiological substrate. In Synechococcus sp. (strain JA-3-3Ab) (Cyanobacteria bacterium Yellowstone A-Prime), this protein is Octanoyltransferase.